A 284-amino-acid chain; its full sequence is 2-dehydro-3-deoxyphosphooctonate aldolase (284 aa).

The protein belongs to the KdsA family.

Its subcellular location is the cytoplasm. The catalysed reaction is D-arabinose 5-phosphate + phosphoenolpyruvate + H2O = 3-deoxy-alpha-D-manno-2-octulosonate-8-phosphate + phosphate. It functions in the pathway carbohydrate biosynthesis; 3-deoxy-D-manno-octulosonate biosynthesis; 3-deoxy-D-manno-octulosonate from D-ribulose 5-phosphate: step 2/3. The protein operates within bacterial outer membrane biogenesis; lipopolysaccharide biosynthesis. This Actinobacillus succinogenes (strain ATCC 55618 / DSM 22257 / CCUG 43843 / 130Z) protein is 2-dehydro-3-deoxyphosphooctonate aldolase.